The sequence spans 156 residues: Small ribosomal subunit protein uS7 (156 aa).

This sequence belongs to the universal ribosomal protein uS7 family. In terms of assembly, part of the 30S ribosomal subunit. Contacts proteins S9 and S11.

One of the primary rRNA binding proteins, it binds directly to 16S rRNA where it nucleates assembly of the head domain of the 30S subunit. Is located at the subunit interface close to the decoding center, probably blocks exit of the E-site tRNA. The protein is Small ribosomal subunit protein uS7 of Erwinia tasmaniensis (strain DSM 17950 / CFBP 7177 / CIP 109463 / NCPPB 4357 / Et1/99).